A 197-amino-acid polypeptide reads, in one-letter code: Adenylyl-sulfate kinase (197 aa).

An ATP-binding site is contributed by 33 to 40; it reads GLSGSGKS. Ser107 acts as the Phosphoserine intermediate in catalysis.

Belongs to the APS kinase family.

It carries out the reaction adenosine 5'-phosphosulfate + ATP = 3'-phosphoadenylyl sulfate + ADP + H(+). Its pathway is sulfur metabolism; hydrogen sulfide biosynthesis; sulfite from sulfate: step 2/3. Catalyzes the synthesis of activated sulfate. The chain is Adenylyl-sulfate kinase from Bacillus licheniformis (strain ATCC 14580 / DSM 13 / JCM 2505 / CCUG 7422 / NBRC 12200 / NCIMB 9375 / NCTC 10341 / NRRL NRS-1264 / Gibson 46).